A 158-amino-acid chain; its full sequence is 2-C-methyl-D-erythritol 2,4-cyclodiphosphate synthase (158 aa).

The a divalent metal cation site is built by Asp8 and His10. Residues 8 to 10 and 34 to 35 contribute to the 4-CDP-2-C-methyl-D-erythritol 2-phosphate site; these read DVH and HS. His42 provides a ligand contact to a divalent metal cation. Residues 56–58, 61–65, 100–106, 132–135, and Phe139 contribute to the 4-CDP-2-C-methyl-D-erythritol 2-phosphate site; these read DIG, FPDTD, AQKPKML, and TTEE.

It belongs to the IspF family. Homotrimer. A divalent metal cation serves as cofactor.

The catalysed reaction is 4-CDP-2-C-methyl-D-erythritol 2-phosphate = 2-C-methyl-D-erythritol 2,4-cyclic diphosphate + CMP. It functions in the pathway isoprenoid biosynthesis; isopentenyl diphosphate biosynthesis via DXP pathway; isopentenyl diphosphate from 1-deoxy-D-xylulose 5-phosphate: step 4/6. Its function is as follows. Involved in the biosynthesis of isopentenyl diphosphate (IPP) and dimethylallyl diphosphate (DMAPP), two major building blocks of isoprenoid compounds. Catalyzes the conversion of 4-diphosphocytidyl-2-C-methyl-D-erythritol 2-phosphate (CDP-ME2P) to 2-C-methyl-D-erythritol 2,4-cyclodiphosphate (ME-CPP) with a corresponding release of cytidine 5-monophosphate (CMP). The protein is 2-C-methyl-D-erythritol 2,4-cyclodiphosphate synthase of Clostridium beijerinckii (strain ATCC 51743 / NCIMB 8052) (Clostridium acetobutylicum).